The primary structure comprises 166 residues: UPF0304 protein VV1_2093 (166 aa).

It belongs to the UPF0304 family.

This Vibrio vulnificus (strain CMCP6) protein is UPF0304 protein VV1_2093.